A 427-amino-acid chain; its full sequence is Tyrosine--tRNA ligase (427 aa).

Y33 is an L-tyrosine binding site. The 'HIGH' region motif lies at 38–47; it reads PTAPSLHVGN. Positions 168 and 172 each coordinate L-tyrosine. Residues 228-232 carry the 'KMSKS' region motif; that stretch reads KFGKS. K231 serves as a coordination point for ATP. One can recognise an S4 RNA-binding domain in the interval 358–426; sequence EHMLDLVAST…GKKHHYLIKV (69 aa).

Belongs to the class-I aminoacyl-tRNA synthetase family. TyrS type 1 subfamily. As to quaternary structure, homodimer.

It is found in the cytoplasm. The catalysed reaction is tRNA(Tyr) + L-tyrosine + ATP = L-tyrosyl-tRNA(Tyr) + AMP + diphosphate + H(+). Functionally, catalyzes the attachment of tyrosine to tRNA(Tyr) in a two-step reaction: tyrosine is first activated by ATP to form Tyr-AMP and then transferred to the acceptor end of tRNA(Tyr). The sequence is that of Tyrosine--tRNA ligase from Amoebophilus asiaticus (strain 5a2).